Reading from the N-terminus, the 613-residue chain is MLGAIGVVFGDIGTSPLYALKECFNPEHGVPFSTQTVYGVLSMLFWSMTLVVSIKYVVFVMRADNNGEGGILALTALAMRASSGGARTIRTLMLLGLLGASMFYGDAVITPAISVLSAVEGMEVMTPALQPWVLPLSLIVLVGLFLLQKHGTHVVGRLFGPVMLFWFVLLGLIGLFSVLRSPQILVALNPVHAIEFMFRHAVQAFIVFGSVFLALTGAEALYADMGHFGARPIRYAWFYIAMPCLLLNYFGQGALLLREPSALQNPFFLLMPTWAVAPTIVLATAATVIASQAVISGAFSMTAQAVHLGYAPRMKILYTSDVEIGQIYVPVVNYALLLLVVAVVLAFGKSDNLAAAYGIAVTTTMLLTTGLVTVVMRNAWKWSLPAVALLGTVFLAVDLSFFGANLLKVAAGGWFPLLLGGLIFFLMVTWHTGTQLLKARNVEGGIPLEPFMEGLLSHPPYRVDGTAVYLTPSIEFVPLALLHNLKHNHVLHSRVLFIHFRTQAVPYVEPAKRLVVKTIGDNLYAVAADFGFKETPAVDEIVRMVGERLGIVFEDMETSFFITRATVVPSQLPGMAMWREALFAWMQHNSAKPSDFFRIPANRLVELGSKVEI.

Transmembrane regions (helical) follow at residues 40 to 60 (VLSM…VVFV), 93 to 113 (MLLG…TPAI), 127 to 147 (PALQ…LFLL), 158 to 178 (LFGP…LFSV), 201 to 221 (AVQA…AEAL), 237 to 257 (WFYI…ALLL), 266 to 286 (PFFL…ATAA), 288 to 308 (VIAS…AVHL), 327 to 347 (IYVP…VLAF), 356 to 376 (AYGI…TVVM), 384 to 404 (LPAV…FFGA), and 409 to 429 (VAAG…LMVT).

It belongs to the HAK/KUP transporter (TC 2.A.72) family.

Its subcellular location is the cell inner membrane. The catalysed reaction is K(+)(in) + H(+)(in) = K(+)(out) + H(+)(out). Its function is as follows. Transport of potassium into the cell. Likely operates as a K(+):H(+) symporter. This chain is Probable potassium transport system protein Kup 1, found in Ralstonia nicotianae (strain ATCC BAA-1114 / GMI1000) (Ralstonia solanacearum).